Reading from the N-terminus, the 441-residue chain is 3-oxo-glucose-6-phosphate:glutamate aminotransferase (441 aa).

98–99 (TS) is a substrate binding site. 125-126 (GT) contributes to the pyridoxal 5'-phosphate binding site. Residue Phe151 participates in substrate binding. Pyridoxal 5'-phosphate-binding residues include Gln225 and Ser242. Position 244 to 246 (244 to 246 (NPY)) interacts with substrate. N6-(pyridoxal phosphate)lysine is present on Lys247. Substrate-binding residues include Tyr274 and Lys282. Position 292 (Asn292) interacts with pyridoxal 5'-phosphate. Residue Tyr379 coordinates substrate.

It belongs to the DegT/DnrJ/EryC1 family. In terms of assembly, homodimer. Requires pyridoxal 5'-phosphate as cofactor.

The catalysed reaction is 3-dehydro-D-glucose 6-phosphate + L-glutamate = D-kanosamine 6-phosphate + 2-oxoglutarate. It functions in the pathway antibiotic biosynthesis; kanosamine biosynthesis. Its function is as follows. Involved in the biosynthesis of kanosamine (3-amino-3-deoxy-D-glucose), which is known to have antibiotic and antifungal properties, and to be a precursor of the antibiotic neotrehalosadiamine (3,3'-diamino-3,3'-dideoxy-alpha,beta-trehalose (NTD)). Catalyzes the reversible pyridoxal phosphate-dependent transamination of 3-dehydro-alpha-D-glucose 6-phosphate to form alpha-D-kanosamine-6-phosphate. It can only use alpha-anomer and glutamate is the only amino donor. This is 3-oxo-glucose-6-phosphate:glutamate aminotransferase (ntdA) from Bacillus subtilis (strain 168).